A 321-amino-acid chain; its full sequence is GTP 3',8-cyclase (321 aa).

Positions 5-233 constitute a Radical SAM core domain; that stretch reads SFNRVIDYIR…QGSSKIYTLE (229 aa). A GTP-binding site is contributed by Arg14. Residues Cys21 and Cys25 each coordinate [4Fe-4S] cluster. Tyr27 contacts S-adenosyl-L-methionine. Cys28 serves as a coordination point for [4Fe-4S] cluster. A GTP-binding site is contributed by Arg64. Gly68 is a binding site for S-adenosyl-L-methionine. Ser95 contacts GTP. An S-adenosyl-L-methionine-binding site is contributed by Ser119. GTP is bound at residue Lys155. Met189 is a binding site for S-adenosyl-L-methionine. [4Fe-4S] cluster-binding residues include Cys249 and Cys252. GTP is bound at residue 254–256; sequence RIR. A [4Fe-4S] cluster-binding site is contributed by Cys266.

The protein belongs to the radical SAM superfamily. MoaA family. In terms of assembly, monomer and homodimer. The cofactor is [4Fe-4S] cluster.

It catalyses the reaction GTP + AH2 + S-adenosyl-L-methionine = (8S)-3',8-cyclo-7,8-dihydroguanosine 5'-triphosphate + 5'-deoxyadenosine + L-methionine + A + H(+). The protein operates within cofactor biosynthesis; molybdopterin biosynthesis. Catalyzes the cyclization of GTP to (8S)-3',8-cyclo-7,8-dihydroguanosine 5'-triphosphate. In Helicobacter pylori (strain J99 / ATCC 700824) (Campylobacter pylori J99), this protein is GTP 3',8-cyclase.